The sequence spans 346 residues: Fusaric acid resistance protein FusC (346 aa).

Helical transmembrane passes span 10–30 (VIIG…RYTG), 248–268 (VILA…VMLV), 291–311 (MGMG…GIYP), and 315–335 (GFVL…YMSL).

This sequence belongs to the aromatic acid exporter ArAE (TC 2.A.85) family.

The protein localises to the cell membrane. Functionally, involved in the resistance (detoxification) of the fungal toxin fusaric acid. In Burkholderia cepacia (Pseudomonas cepacia), this protein is Fusaric acid resistance protein FusC (fusC).